Consider the following 124-residue polypeptide: Phosphoribosyl-AMP cyclohydrolase (124 aa).

Aspartate 82 contributes to the Mg(2+) binding site. Residue cysteine 83 coordinates Zn(2+). The Mg(2+) site is built by aspartate 84 and aspartate 86. Cysteine 99 and cysteine 106 together coordinate Zn(2+).

It belongs to the PRA-CH family. Homodimer. Mg(2+) is required as a cofactor. It depends on Zn(2+) as a cofactor.

It is found in the cytoplasm. It carries out the reaction 1-(5-phospho-beta-D-ribosyl)-5'-AMP + H2O = 1-(5-phospho-beta-D-ribosyl)-5-[(5-phospho-beta-D-ribosylamino)methylideneamino]imidazole-4-carboxamide. It participates in amino-acid biosynthesis; L-histidine biosynthesis; L-histidine from 5-phospho-alpha-D-ribose 1-diphosphate: step 3/9. Catalyzes the hydrolysis of the adenine ring of phosphoribosyl-AMP. In Zymomonas mobilis subsp. mobilis (strain ATCC 31821 / ZM4 / CP4), this protein is Phosphoribosyl-AMP cyclohydrolase.